Reading from the N-terminus, the 445-residue chain is NADH-quinone oxidoreductase subunit F (445 aa).

61-70 provides a ligand contact to NAD(+); that stretch reads GRGGAGFATG. An FMN-binding site is contributed by 177–224; the sequence is GAGAYICGEETALLDSLEGRRGQPRLRPPFPAVAGLYGCPTVINNVET. [4Fe-4S] cluster is bound by residues C353, C356, C359, and C399.

The protein belongs to the complex I 51 kDa subunit family. The cofactor is FMN. [4Fe-4S] cluster is required as a cofactor.

It catalyses the reaction a quinone + NADH + 5 H(+)(in) = a quinol + NAD(+) + 4 H(+)(out). Its function is as follows. NDH-1 shuttles electrons from NADH, via FMN and iron-sulfur (Fe-S) centers, to quinones in the respiratory chain. The immediate electron acceptor for the enzyme in this species is believed to be menaquinone. Couples the redox reaction to proton translocation (for every two electrons transferred, four hydrogen ions are translocated across the cytoplasmic membrane), and thus conserves the redox energy in a proton gradient. This Mycobacterium bovis (strain ATCC BAA-935 / AF2122/97) protein is NADH-quinone oxidoreductase subunit F (nuoF).